Reading from the N-terminus, the 187-residue chain is Protein canopy-1 (187 aa).

An N-terminal signal peptide occupies residues 1–24; sequence MSPWIKHICLVLVAAFMLVKTTES. Positions 28–181 constitute a Saposin B-type domain; sequence EALYCSACMA…EVSDHCKSSV (154 aa). 3 cysteine pairs are disulfide-bonded: Cys32/Cys177, Cys35/Cys170, and Cys90/Cys143. The short motif at 184 to 187 is the Prevents secretion from ER element; sequence HSEL.

It belongs to the canopy family. Homodimer. Interacts with fgfr1.

The protein resides in the endoplasmic reticulum. Functionally, involved in the maintenance of the midbrain-hindbrain boundary (MHB) organizer. Contributes to a positive-feedback loop of FGF signaling in the MHB, enabling the MHB to exert its role as an organizer for the tectal and cerebellar development. The sequence is that of Protein canopy-1 (cnpy1) from Danio rerio (Zebrafish).